Consider the following 600-residue polypeptide: Monooxygenase ptmN (600 aa).

It belongs to the FMO family. The cofactor is FAD.

It functions in the pathway secondary metabolite biosynthesis. In terms of biological role, monooxygenase; part of the gene cluster that mediates the biosynthesis of the indole diterpenes penitrems. The geranylgeranyl diphosphate (GGPP) synthase ptmG catalyzes the first step in penitrem biosynthesis via conversion of farnesyl pyrophosphate and isopentyl pyrophosphate into geranylgeranyl pyrophosphate (GGPP). Condensation of indole-3-glycerol phosphate with GGPP by the prenyl transferase ptmC then forms 3-geranylgeranylindole (3-GGI). Epoxidation by the FAD-dependent monooxygenase ptmM leads to a epoxidized-GGI that is substrate of the terpene cyclase ptmB for cyclization to yield paspaline. Paspaline is subsequently converted to 13-desoxypaxilline by the cytochrome P450 monooxygenase ptmP, the latter being then converted to paxilline by the cytochrome P450 monooxygenase ptmQ. Paxilline is converted to beta-paxitriol via C-10 ketoreduction by the short-chain dehydrogenase ptmH which can be monoprenylated at the C-20 by the indole diterpene prenyltransferase ptmD. A two-step elimination (acetylation and elimination) process performed by the O-acetyltransferase ptmV and ptmI leads to the production of the prenylated form of penijanthine. The FAD-linked oxidoreductase ptmO then converts the prenylated form of penijanthine into PC-M5 which is in turn transformed into PC-M4 by the aromatic dimethylallyltransferase ptmE. Five sequential oxidative transformations performed by the cytochrome P450 monooxygenases ptmK, ptmU, ptmL, ptmN and ptmJ yield the various penitrem compounds. PtmK, ptmU and ptmM are involved in the formation of the key bicyclic ring of penitrem C via the formation of the intermediates secopenitrem D and penitrem D. PtmL catalyzes the epoxidation of penitrem D and C to yield penitrem B and F, respectively. PtmJ catalyzes the last benzylic hydroxylation to convert penitrem B to prenitrem E and penitrem F to penitrem A. The sequence is that of Monooxygenase ptmN from Penicillium ochrochloron.